We begin with the raw amino-acid sequence, 374 residues long: Alcohol dehydrogenase 1 (374 aa).

N-acetylserine is present on Ser1. The Zn(2+) site is built by Cys46, His67, Cys97, Cys100, Cys103, Cys111, and Cys174. NAD(+) is bound by residues 199–204 (GLGGVG), Asp223, Lys228, 292–294 (VGV), and Arg369.

The protein belongs to the zinc-containing alcohol dehydrogenase family. Class-I subfamily. Zn(2+) serves as cofactor.

It localises to the cytoplasm. It carries out the reaction a primary alcohol + NAD(+) = an aldehyde + NADH + H(+). The enzyme catalyses a secondary alcohol + NAD(+) = a ketone + NADH + H(+). The sequence is that of Alcohol dehydrogenase 1 from Alligator mississippiensis (American alligator).